The primary structure comprises 144 residues: UPF0102 protein BPSL3274 (144 aa).

A disordered region spans residues 1 to 28 (MCHAREASPGTGEPEAAPRDNFPREAGS). Residues 16–28 (AAPRDNFPREAGS) show a composition bias toward basic and acidic residues.

The protein belongs to the UPF0102 family.

This Burkholderia pseudomallei (strain K96243) protein is UPF0102 protein BPSL3274.